The chain runs to 458 residues: Argininosuccinate lyase (458 aa).

Belongs to the lyase 1 family. Argininosuccinate lyase subfamily.

It localises to the cytoplasm. The catalysed reaction is 2-(N(omega)-L-arginino)succinate = fumarate + L-arginine. It participates in amino-acid biosynthesis; L-arginine biosynthesis; L-arginine from L-ornithine and carbamoyl phosphate: step 3/3. In Geobacter sulfurreducens (strain ATCC 51573 / DSM 12127 / PCA), this protein is Argininosuccinate lyase.